Consider the following 245-residue polypeptide: MAEELSAATSYTEDDFYCPVCQEVLKTPVRTAACQHVFCRKCFLTAMRESGIHCPLCRGNVTRRERACPERALDLENIMRKFSGSCRCCAKQIKFYRMRHHYKSCKKYQDEYGVSSIIPNFQISQDSVGNSNRSETSASDNIETYQENTGSSGHPTFKCPLCQESNFTRQRLLDHCNSNHLFQIVPVTCPICVSLPWGDPSQVTRNFVSHLNQRHQFDYGEFVNLQLDEETQYQTAVEESFQVNI.

N-acetylalanine is present on alanine 2. Residues 18–58 form an RING-type zinc finger; the sequence is CPVCQEVLKTPVRTAACQHVFCRKCFLTAMRESGIHCPLCR. Residues cysteine 86, cysteine 89, histidine 101, and cysteine 105 each contribute to the Zn(2+) site. Residues 86–105 form a C2HC RNF-type zinc finger; it reads CRCCAKQIKFYRMRHHYKSC. Residues 128–153 are disordered; the sequence is VGNSNRSETSASDNIETYQENTGSSG. C2H2-type zinc fingers lie at residues 157–180 and 187–215; these read FKCP…NSNH and VTCP…NQRH. In terms of domain architecture, UIM spans 225–243; sequence LQLDEETQYQTAVEESFQV.

As to quaternary structure, interacts with NLK. Interacts with XRCC5/Ku80. Interacts with RBBP8/CtIP. In terms of processing, auto-ubiquitinated.

The protein localises to the chromosome. The enzyme catalyses S-ubiquitinyl-[E2 ubiquitin-conjugating enzyme]-L-cysteine + [acceptor protein]-L-lysine = [E2 ubiquitin-conjugating enzyme]-L-cysteine + N(6)-ubiquitinyl-[acceptor protein]-L-lysine.. It functions in the pathway protein modification; protein ubiquitination. Functionally, E3 ubiquitin-protein ligase involved in DNA damage response by promoting DNA resection and homologous recombination. Recruited to sites of double-strand breaks following DNA damage and specifically promotes double-strand break repair via homologous recombination. Two different, non-exclusive, mechanisms have been proposed. According to a report, regulates the choice of double-strand break repair by favoring homologous recombination over non-homologous end joining (NHEJ): acts by mediating ubiquitination of XRCC5/Ku80, leading to remove the Ku complex from DNA breaks, thereby promoting homologous recombination. According to another report, cooperates with UBE2Ds E2 ubiquitin ligases (UBE2D1, UBE2D2, UBE2D3 or UBE2D4) to promote homologous recombination by mediating ubiquitination of RBBP8/CtIP. Together with NLK, involved in the ubiquitination and degradation of TCF/LEF. Also exhibits auto-ubiquitination activity in combination with UBE2K. May act as a negative regulator in the Wnt/beta-catenin-mediated signaling pathway. The sequence is that of E3 ubiquitin-protein ligase RNF138 (RNF138) from Bos taurus (Bovine).